Here is a 384-residue protein sequence, read N- to C-terminus: F-box A protein 224 (384 aa).

An F-box domain is found at 71–122; the sequence is PKSLSDFPIGVMYDVLGHVDPFERLVLRKVSRNLRDVVQKMRCELDALYVNK.

This sequence belongs to the FTH family.

The polypeptide is F-box A protein 224 (fbxa-224) (Caenorhabditis elegans).